A 310-amino-acid polypeptide reads, in one-letter code: Solute carrier family 25 member 47 (310 aa).

3 Solcar repeats span residues 1–80 (MDFV…CLAH), 93–208 (PTKA…LSEW), and 217–304 (PDVL…VLRL). The next 6 membrane-spanning stretches (helical) occupy residues 3–23 (FVAGAIGGVCGVAVGYPLDTV), 49–69 (LWGFYRGLSLPVCTVSLVSSV), 98–116 (ITLSGCASGLVRVFLTSPT), 192–212 (GHSFATYFLSYAVLSEWLTPA), 219–239 (VLGVLVAGGCAGVLAWAVATP), and 275–295 (VLFKGLALNCCRAFPVNMVVF).

Belongs to the mitochondrial carrier (TC 2.A.29) family.

Its subcellular location is the mitochondrion inner membrane. It localises to the mitochondrion outer membrane. The enzyme catalyses NAD(+)(in) = NAD(+)(out). The catalysed reaction is acetyl-CoA(in) = acetyl-CoA(out). In terms of biological role, mitochondrial NAD(+) transporter that acts as a 'metabolic gate' in hepatic lipogenesis. Provides NAD(+) substrate to mitochondrial SIRT3 deacetylase and enables its NAD(+)-dependent activities in mitochondrial energy metabolism. This triggers downstream activation of PRKAA1/AMPK-alpha signaling cascade that negatively regulates sterol regulatory element-binding protein (SREBP) transcriptional activities and ATP-consuming lipogenesis to restore cellular energy balance. May transport other mitochondrial metabolites having an aromatic nucleotide and phosphate groups, such as acetyl-CoA. Does not transport amino acids. The transport mechanism remains to be elucidated. This is Solute carrier family 25 member 47 from Rattus norvegicus (Rat).